The chain runs to 149 residues: Large ribosomal subunit protein uL13 (149 aa).

The protein belongs to the universal ribosomal protein uL13 family. As to quaternary structure, part of the 50S ribosomal subunit.

Functionally, this protein is one of the early assembly proteins of the 50S ribosomal subunit, although it is not seen to bind rRNA by itself. It is important during the early stages of 50S assembly. The chain is Large ribosomal subunit protein uL13 from Prosthecochloris aestuarii (strain DSM 271 / SK 413).